A 796-amino-acid polypeptide reads, in one-letter code: High affinity nerve growth factor receptor (796 aa).

The N-terminal stretch at 1–32 (MLRGGRRGQLGWHSWAAGPGSLLAWLILASAG) is a signal peptide. The Extracellular portion of the chain corresponds to 33–423 (AAPCPDACCP…TPFGVSVAVG (391 aa)). Cystine bridges form between Cys-36–Cys-41 and Cys-40–Cys-50. N-linked (GlcNAc...) asparagine glycans are attached at residues Asn-67, Asn-95, Asn-121, Asn-188, Asn-202, Asn-253, Asn-262, Asn-281, Asn-318, Asn-323, Asn-338, Asn-358, and Asn-401. LRR repeat units lie at residues 90 to 113 (LGEL…AFHF) and 116 to 137 (RLSR…TVQG). In terms of domain architecture, LRRCT spans 148–193 (NPLHCSCALRWLQRWEEEGLGGVPEQKLQCHGQGPLAHMPNASCGV). Residues Cys-154 and Cys-191 are joined by a disulfide bond. Ig-like C2-type domains follow at residues 194–283 (PTLK…VNVS) and 299–365 (WCIP…LAAN). Residues Cys-215 and Cys-265 are joined by a disulfide bond. The cysteines at positions 300 and 345 are disulfide-linked. Residues 424-439 (LAVFACLFLSTLLLVL) form a helical membrane-spanning segment. The Cytoplasmic segment spans residues 440–796 (NKCGRRNKFG…APPVYLDVLG (357 aa)). Positions 469–490 (MTLGGSSLSPTEGKGSGLQGHI) are interaction with SQSTM1. Tyr-496 is subject to Phosphotyrosine; by autocatalysis. Residues 510 to 781 (IVLKWELGEG…HSIKDVHARL (272 aa)) form the Protein kinase domain. 516-524 (LGEGAFGKV) lines the ATP pocket. A DXXLL motif is present at residues 537-541 (DKMLV). Lys-544 lines the ATP pocket. The DXXLL signature appears at 607 to 611 (DAKLL). Catalysis depends on Asp-650, which acts as the Proton acceptor. A phosphotyrosine; by autocatalysis mark is found at Tyr-676, Tyr-680, Tyr-681, and Tyr-791.

It belongs to the protein kinase superfamily. Tyr protein kinase family. Insulin receptor subfamily. Exists in a dynamic equilibrium between monomeric (low affinity) and dimeric (high affinity) structures. Homodimerization is induced by binding of a NGF dimer. Interacts with SQSTM1; bridges NTRK1 to NGFR. Forms a ternary complex with NGFR and KIDINS220; this complex is affected by the expression levels of KIDINS220 and an increase in KIDINS220 expression leads to a decreased association of NGFR and NTRK1. Interacts with SH2D1A; regulates NTRK1. Interacts (phosphorylated upon activation by NGF) with SHC1; mediates SHC1 phosphorylation and activation. Interacts (phosphorylated upon activation by NGF) with PLCG1; mediates PLCG1 phosphorylation and activation. Interacts (phosphorylated) with SH2B1 and SH2B2. Interacts with GRB2. Interacts with PIK3R1. Interacts with FRS2. Interacts with SORT1; may regulate NTRK1 anterograde axonal transport. Interacts with RAB7A. Found in a complex, at least composed of KIDINS220, MAGI2, NTRK1 and RAPGEF2; the complex is mainly formed at late endosomes in a nerve growth factor (NGF)-dependent manner. Interacts with RAPGEF2; the interaction is strengthened after NGF stimulation. Interacts with PTPRS. Interacts with USP36; USP36 does not deubiquitinate NTRK1. Interacts with GGA3. Interacts with TSPAN1; this interaction promotes NTRK1 stability. In terms of processing, ligand-mediated autophosphorylation. Interaction with SQSTM1 is phosphotyrosine-dependent. Autophosphorylation at Tyr-496 mediates interaction and phosphorylation of SHC1. N-glycosylated. Isoform TrkA-I and isoform TrkA-II are N-glycosylated. Post-translationally, ubiquitinated. Undergoes polyubiquitination upon activation; regulated by NGFR. Ubiquitination by NEDD4L leads to degradation. Ubiquitination regulates the internalization of the receptor. In terms of tissue distribution, isoform TrkA-I is found in most non-neuronal tissues. Isoform TrkA-II is primarily expressed in neuronal cells. TrkA-III is specifically expressed by pluripotent neural stem and neural crest progenitors.

The protein resides in the cell membrane. The protein localises to the early endosome membrane. Its subcellular location is the late endosome membrane. It is found in the recycling endosome membrane. It carries out the reaction L-tyrosyl-[protein] + ATP = O-phospho-L-tyrosyl-[protein] + ADP + H(+). Its activity is regulated as follows. The pro-survival signaling effect of NTRK1 in neurons requires its endocytosis into signaling early endosomes and its retrograde axonal transport. This is regulated by different proteins including CFL1, RAC1 and SORT1. NTF3 is unable to induce this signaling probably due to the lability of the NTF3-NTRK1 complex in endosomes. SH2D1A inhibits the autophosphorylation of the receptor, and alters the recruitment and activation of downstream effectors and signaling cascades. Regulated by NGFR. In terms of biological role, receptor tyrosine kinase involved in the development and the maturation of the central and peripheral nervous systems through regulation of proliferation, differentiation and survival of sympathetic and nervous neurons. High affinity receptor for NGF which is its primary ligand. Can also bind and be activated by NTF3/neurotrophin-3. However, NTF3 only supports axonal extension through NTRK1 but has no effect on neuron survival. Upon dimeric NGF ligand-binding, undergoes homodimerization, autophosphorylation and activation. Recruits, phosphorylates and/or activates several downstream effectors including SHC1, FRS2, SH2B1, SH2B2 and PLCG1 that regulate distinct overlapping signaling cascades driving cell survival and differentiation. Through SHC1 and FRS2 activates a GRB2-Ras-MAPK cascade that regulates cell differentiation and survival. Through PLCG1 controls NF-Kappa-B activation and the transcription of genes involved in cell survival. Through SHC1 and SH2B1 controls a Ras-PI3 kinase-AKT1 signaling cascade that is also regulating survival. In absence of ligand and activation, may promote cell death, making the survival of neurons dependent on trophic factors. Its function is as follows. Resistant to NGF, it constitutively activates AKT1 and NF-kappa-B and is unable to activate the Ras-MAPK signaling cascade. Antagonizes the anti-proliferative NGF-NTRK1 signaling that promotes neuronal precursors differentiation. Isoform TrkA-III promotes angiogenesis and has oncogenic activity when overexpressed. The sequence is that of High affinity nerve growth factor receptor (NTRK1) from Homo sapiens (Human).